A 389-amino-acid chain; its full sequence is 26S proteasome regulatory subunit 10B (389 aa).

N6-acetyllysine is present on Lys72. 174–181 (GPPGTGKT) provides a ligand contact to ATP. An N6-acetyllysine modification is found at Lys206. A Phosphoserine modification is found at Ser244.

Belongs to the AAA ATPase family. Component of the 19S proteasome regulatory particle complex. The 26S proteasome consists of a 20S core particle (CP) and two 19S regulatory subunits (RP). The regulatory particle is made of a lid composed of 9 subunits, a base containing 6 ATPases including PSMC6 and few additional components. Interacts with PAAF1.

It is found in the cytoplasm. The protein resides in the nucleus. Functionally, component of the 26S proteasome, a multiprotein complex involved in the ATP-dependent degradation of ubiquitinated proteins. This complex plays a key role in the maintenance of protein homeostasis by removing misfolded or damaged proteins, which could impair cellular functions, and by removing proteins whose functions are no longer required. Therefore, the proteasome participates in numerous cellular processes, including cell cycle progression, apoptosis, or DNA damage repair. PSMC6 belongs to the heterohexameric ring of AAA (ATPases associated with diverse cellular activities) proteins that unfolds ubiquitinated target proteins that are concurrently translocated into a proteolytic chamber and degraded into peptides. The protein is 26S proteasome regulatory subunit 10B (PSMC6) of Homo sapiens (Human).